The following is a 505-amino-acid chain: 2,3-bisphosphoglycerate-independent phosphoglycerate mutase (505 aa).

The Mn(2+) site is built by Asp-13 and Ser-63. Ser-63 (phosphoserine intermediate) is an active-site residue. Residues His-124, 153–154, Arg-183, Arg-189, 254–257, and Lys-329 each bind substrate; these read RD and RADR. 5 residues coordinate Mn(2+): Asp-395, His-399, Asp-436, His-437, and His-455.

It belongs to the BPG-independent phosphoglycerate mutase family. As to quaternary structure, monomer. Requires Mn(2+) as cofactor.

It carries out the reaction (2R)-2-phosphoglycerate = (2R)-3-phosphoglycerate. Its pathway is carbohydrate degradation; glycolysis; pyruvate from D-glyceraldehyde 3-phosphate: step 3/5. Catalyzes the interconversion of 2-phosphoglycerate and 3-phosphoglycerate. This is 2,3-bisphosphoglycerate-independent phosphoglycerate mutase from Agrobacterium fabrum (strain C58 / ATCC 33970) (Agrobacterium tumefaciens (strain C58)).